Reading from the N-terminus, the 139-residue chain is Large ribosomal subunit protein bL17 (139 aa).

Belongs to the bacterial ribosomal protein bL17 family. Part of the 50S ribosomal subunit. Contacts protein L32.

The chain is Large ribosomal subunit protein bL17 from Cereibacter sphaeroides (strain ATCC 17029 / ATH 2.4.9) (Rhodobacter sphaeroides).